The primary structure comprises 445 residues: Adenylosuccinate synthetase (445 aa).

GTP is bound by residues 12–18 (GDEGKGK) and 40–42 (GHT). Asp-13 functions as the Proton acceptor in the catalytic mechanism. Residues Asp-13 and Gly-40 each contribute to the Mg(2+) site. IMP contacts are provided by residues 13-16 (DEGK), 38-41 (NAGH), Thr-128, Arg-142, Gln-223, Thr-238, and Arg-302. Catalysis depends on His-41, which acts as the Proton donor. 298–304 (TTTGRKR) contributes to the substrate binding site. Residues Arg-304, 330-332 (KLD), and 411-413 (SLG) contribute to the GTP site.

Belongs to the adenylosuccinate synthetase family. As to quaternary structure, homodimer. Mg(2+) is required as a cofactor.

The protein resides in the cytoplasm. The enzyme catalyses IMP + L-aspartate + GTP = N(6)-(1,2-dicarboxyethyl)-AMP + GDP + phosphate + 2 H(+). Its pathway is purine metabolism; AMP biosynthesis via de novo pathway; AMP from IMP: step 1/2. Its function is as follows. Plays an important role in the de novo pathway of purine nucleotide biosynthesis. Catalyzes the first committed step in the biosynthesis of AMP from IMP. The protein is Adenylosuccinate synthetase of Cyanothece sp. (strain PCC 7425 / ATCC 29141).